We begin with the raw amino-acid sequence, 195 residues long: HTH-type transcriptional regulator BetI (195 aa).

One can recognise an HTH tetR-type domain in the interval 8 to 68; the sequence is PIRRQQLIEA…ATMRYLISHL (61 aa). A DNA-binding region (H-T-H motif) is located at residues 31 to 50; it reads SIVQIARRAGVSNGIISHYF.

The protein operates within amine and polyamine biosynthesis; betaine biosynthesis via choline pathway [regulation]. Repressor involved in the biosynthesis of the osmoprotectant glycine betaine. It represses transcription of the choline transporter BetT and the genes of BetAB involved in the synthesis of glycine betaine. This Pectobacterium carotovorum subsp. carotovorum (strain PC1) protein is HTH-type transcriptional regulator BetI.